The following is a 148-amino-acid chain: 3-hydroxyacyl-[acyl-carrier-protein] dehydratase FabZ (148 aa).

The active site involves H48.

Belongs to the thioester dehydratase family. FabZ subfamily.

It localises to the cytoplasm. It carries out the reaction a (3R)-hydroxyacyl-[ACP] = a (2E)-enoyl-[ACP] + H2O. Its function is as follows. Involved in unsaturated fatty acids biosynthesis. Catalyzes the dehydration of short chain beta-hydroxyacyl-ACPs and long chain saturated and unsaturated beta-hydroxyacyl-ACPs. The polypeptide is 3-hydroxyacyl-[acyl-carrier-protein] dehydratase FabZ (Acinetobacter baylyi (strain ATCC 33305 / BD413 / ADP1)).